The chain runs to 258 residues: MFNMWKQQKLKLSPQAKTTLQNAQKGILSPFSLSVSGTKLGVHNWSHGIKEKSNHYLSPENAVKALAAKLVDYADPNRPKGVQDVVVIMVTSSNIDQFIAELEKVRELLPEPTFKQALDYAKSSKDLQETKMIKTPTMASPSFSNSADITPGSARTMQSILRNATSAAVAEQTKDPMAMIEALKAAKKERDKANNEKVEKMLNTSANVYAFVVSDYLEIAESKMKVNVPKSSNVFTACVMFIGSDLTNIRGMLQHAET.

This is an uncharacterized protein from Haemophilus influenzae (Bacteriophage HP1).